Consider the following 272-residue polypeptide: MSQHKLSSCSPIGIFDSGIGGLTVLKAVQAALPSERLLYFGDTARVPYGTKSQVTIRKYAREDTELLMKHQPKLIIVACNTVSALALDVVEQTAGDILVIGVLKAGAELAAHRTKSGRIGVIGTQATIGSNAYSCAIREENDALEVTPKACPLFVPLAEEGFIDHPATRLVAEEYLSAFTGKEIDTLVLGCTHYPILRKVIESIAGPQITIIDSAEAVASKAKELLSKHGLLNQSSATTLPHLMVSDLPQKFRELYRLFMGTELPDVELVGM.

Substrate-binding positions include 16–17 (DS) and 48–49 (YG). Cys79 acts as the Proton donor/acceptor in catalysis. Position 80 to 81 (80 to 81 (NT)) interacts with substrate. Residue Cys191 is the Proton donor/acceptor of the active site. Substrate is bound at residue 192 to 193 (TH).

The protein belongs to the aspartate/glutamate racemases family.

The catalysed reaction is L-glutamate = D-glutamate. It participates in cell wall biogenesis; peptidoglycan biosynthesis. In terms of biological role, provides the (R)-glutamate required for cell wall biosynthesis. This is Glutamate racemase from Chlorobaculum parvum (strain DSM 263 / NCIMB 8327) (Chlorobium vibrioforme subsp. thiosulfatophilum).